The primary structure comprises 125 residues: Large ribosomal subunit protein bL12 (125 aa).

The protein belongs to the bacterial ribosomal protein bL12 family. In terms of assembly, homodimer. Part of the ribosomal stalk of the 50S ribosomal subunit. Forms a multimeric L10(L12)X complex, where L10 forms an elongated spine to which 2 to 4 L12 dimers bind in a sequential fashion. Binds GTP-bound translation factors.

Functionally, forms part of the ribosomal stalk which helps the ribosome interact with GTP-bound translation factors. Is thus essential for accurate translation. This Hyphomonas neptunium (strain ATCC 15444) protein is Large ribosomal subunit protein bL12.